A 193-amino-acid polypeptide reads, in one-letter code: NADH-quinone oxidoreductase subunit B (193 aa).

The [4Fe-4S] cluster site is built by Cys72, Cys73, Cys137, and Cys167.

It belongs to the complex I 20 kDa subunit family. NDH-1 is composed of 14 different subunits. Subunits NuoB, C, D, E, F, and G constitute the peripheral sector of the complex. [4Fe-4S] cluster serves as cofactor.

It localises to the cell inner membrane. It carries out the reaction a quinone + NADH + 5 H(+)(in) = a quinol + NAD(+) + 4 H(+)(out). Its function is as follows. NDH-1 shuttles electrons from NADH, via FMN and iron-sulfur (Fe-S) centers, to quinones in the respiratory chain. The immediate electron acceptor for the enzyme in this species is believed to be ubiquinone. Couples the redox reaction to proton translocation (for every two electrons transferred, four hydrogen ions are translocated across the cytoplasmic membrane), and thus conserves the redox energy in a proton gradient. The sequence is that of NADH-quinone oxidoreductase subunit B from Rhizobium rhizogenes (strain K84 / ATCC BAA-868) (Agrobacterium radiobacter).